The sequence spans 508 residues: Glycerol kinase (508 aa).

Threonine 14 contacts ADP. ATP-binding residues include threonine 14, threonine 15, and serine 16. Threonine 14 lines the sn-glycerol 3-phosphate pocket. Position 18 (arginine 18) interacts with ADP. Residues arginine 84, glutamate 85, and tyrosine 136 each contribute to the sn-glycerol 3-phosphate site. Arginine 84, glutamate 85, and tyrosine 136 together coordinate glycerol. Histidine 232 is subject to Phosphohistidine; by HPr. Position 246 (aspartate 246) interacts with sn-glycerol 3-phosphate. Positions 246 and 247 each coordinate glycerol. Residues threonine 268 and glycine 311 each coordinate ADP. Positions 268, 311, 315, and 412 each coordinate ATP. Glycine 412 and asparagine 416 together coordinate ADP.

It belongs to the FGGY kinase family. Homotetramer and homodimer (in equilibrium). The phosphoenolpyruvate-dependent sugar phosphotransferase system (PTS), including enzyme I, and histidine-containing protein (HPr) are required for the phosphorylation, which leads to the activation of the enzyme.

The catalysed reaction is glycerol + ATP = sn-glycerol 3-phosphate + ADP + H(+). It participates in polyol metabolism; glycerol degradation via glycerol kinase pathway; sn-glycerol 3-phosphate from glycerol: step 1/1. Its activity is regulated as follows. Activated by phosphorylation and inhibited by fructose 1,6-bisphosphate (FBP). Its function is as follows. Key enzyme in the regulation of glycerol uptake and metabolism. Catalyzes the phosphorylation of glycerol to yield sn-glycerol 3-phosphate. The polypeptide is Glycerol kinase (Streptococcus pyogenes serotype M4 (strain MGAS10750)).